A 428-amino-acid polypeptide reads, in one-letter code: Histidine--tRNA ligase (428 aa).

This sequence belongs to the class-II aminoacyl-tRNA synthetase family. In terms of assembly, homodimer.

It is found in the cytoplasm. The enzyme catalyses tRNA(His) + L-histidine + ATP = L-histidyl-tRNA(His) + AMP + diphosphate + H(+). The protein is Histidine--tRNA ligase (hisS) of Chlamydia muridarum (strain MoPn / Nigg).